The primary structure comprises 901 residues: HTH-type transcriptional regulator MalT (901 aa).

An ATP-binding site is contributed by 39-46 (SPAGYGKT). The region spanning 829-894 (ELIRTSPLTQ…AAVQHAQKLL (66 aa)) is the HTH luxR-type domain. Positions 853 to 872 (NEQIAGELEVAATTIKTHIR) form a DNA-binding region, H-T-H motif.

Belongs to the MalT family. Monomer in solution. Oligomerizes to an active state in the presence of the positive effectors ATP and maltotriose.

With respect to regulation, activated by ATP and maltotriose, which are both required for DNA binding. Its function is as follows. Positively regulates the transcription of the maltose regulon whose gene products are responsible for uptake and catabolism of malto-oligosaccharides. Specifically binds to the promoter region of its target genes, recognizing a short DNA motif called the MalT box. In Escherichia coli O139:H28 (strain E24377A / ETEC), this protein is HTH-type transcriptional regulator MalT.